The following is a 907-amino-acid chain: Whirlin (907 aa).

The 84-residue stretch at 140-223 folds into the PDZ 1 domain; it reads LVSLRRAKAH…LVLSVYSAGR (84 aa). Residues 243–264 form a disordered region; it reads SISPPSGLPQPHGGALRQQEGD. Residues 279 to 361 form the PDZ 2 domain; sequence KVNLVLGDGR…LILTVKDVGR (83 aa). Disordered stretches follow at residues 502–540, 565–663, 684–717, and 742–815; these read SMKA…TVSS, SVDD…SSKR, QSPP…QTGT, and PQTR…PTST. The segment covering 521–540 has biased composition (low complexity); that stretch reads SYSDTGSSTGSHGTSTTVSS. Over residues 609–626 the composition is skewed to polar residues; that stretch reads PPSSMPSCSGTVFSAPQN. Residues 628-642 show a composition bias toward low complexity; that stretch reads SPPAGTAPTPGTSSA. Position 685 is a phosphoserine (Ser685). Polar residues predominate over residues 743–762; that stretch reads QTRTASTLSQLSDSGQTLSE. Basic and acidic residues predominate over residues 789 to 800; sequence SSKELPRNERPT. Residues 816-899 enclose the PDZ 3 domain; that stretch reads LVRVKKSAAT…TKDRDYIDFL (84 aa).

As to quaternary structure, forms homooligomers. Interacts (via C-terminal PDZ domain) with MYO15A; this interaction is necessary for localization of WHRN to stereocilia tips. Interacts (via C-terminal PDZ domain) with MPP1/p55. Interacts with LRRC4C/NGL1. Interacts with MYO7A. Interacts with RPGR. Interacts with EPS8. Interacts with CASK. Interacts with CIB2. Component of USH2 complex, composed of ADGRV1, PDZD7, USH2A and WHRN. Interacts (via PDZ domains) with PDZD7; the interaction is direct. Interacts (via N-terminal PDZ domain) with USH2A (via cytoplasmic region). Interacts with ADGRV1/MASS1 (via cytoplasmic region).

It is found in the cytoplasm. The protein resides in the cell projection. Its subcellular location is the stereocilium. The protein localises to the growth cone. It localises to the photoreceptor inner segment. It is found in the synapse. In terms of biological role, involved in hearing and vision as member of the USH2 complex. Necessary for elongation and maintenance of inner and outer hair cell stereocilia in the organ of Corti in the inner ear. Involved in the maintenance of the hair bundle ankle region, which connects stereocilia in cochlear hair cells of the inner ear. In retina photoreceptors, required for the maintenance of periciliary membrane complex that seems to play a role in regulating intracellular protein transport. The protein is Whirlin of Homo sapiens (Human).